The chain runs to 729 residues: Ubiquitin carboxyl-terminal hydrolase BAP1 (729 aa).

A UCH catalytic domain is found at 4-235 (GWLELESDPG…IRFNLMAVVP (232 aa)). The Arg-finger motif signature appears at 56–60 (RRSRR). The active-site Nucleophile is the cysteine 91. Catalysis depends on histidine 169, which acts as the Proton donor. At serine 292 the chain carries Phosphoserine. The segment at 301-351 (APAASEGNHTDGAEEAAGSCAQAPSHSPPNKPKLVVKPPGSSLNGVHPNPT) is disordered. The short motif at 363 to 366 (NHNY) is the HBM-like motif element. A phosphoserine mark is found at serine 369 and serine 395. Disordered regions lie at residues 372 to 435 (QEEE…SADG) and 464 to 524 (SIKT…SPVT). Residues 395-409 (SDDEDDYEDDEEDDV) show a composition bias toward acidic residues. A compositionally biased stretch (polar residues) spans 480–524 (THSQPSPTPSNESTDTASEIGSAFNSPLRSPIRSANPTRPSSPVT). Threonine 493 bears the Phosphothreonine mark. Serine 521, serine 537, serine 585, and serine 597 each carry phosphoserine. Residues 575 to 623 (LTEGGKGSSPSIRPIQGSQGSSSPVEKEVVEATDSREKTGMVRPGEPLS) are disordered. Positions 582–598 (SSPSIRPIQGSQGSSSP) are enriched in polar residues. An interaction with BRCA1 region spans residues 596–721 (SSPVEKEVVE…QRKPDRRKRS (126 aa)). The span at 599 to 614 (VEKEVVEATDSREKTG) shows a compositional bias: basic and acidic residues. Positions 636 to 656 (LKCVEAEIANYEACLKEEVEK) form a coiled coil. The interaction with YY1 stretch occupies residues 642 to 686 (EIANYEACLKEEVEKRKKFKIDDQRRTHNYDEFICTFISMLAQEG). The region spanning 670-698 (NYDEFICTFISMLAQEGMLANLVEQNISV) is the ULD domain. An interaction with nucleosomal DNA forming a DNA clamp with ASXL1 region spans residues 699–701 (RRR). Residues 699 to 722 (RRRQGVSIGRLHKQRKPDRRKRSR) carry the Classical bipartite Nuclear localization signal (NLS) motif. The segment at 703-729 (GVSIGRLHKQRKPDRRKRSRPYKAKRQ) is disordered. The tract at residues 713-729 (RKPDRRKRSRPYKAKRQ) is positively charged C-terminal extension (CTE). The Non-classical PY-nuclear localization signal (PY-NLS) motif lies at 717–724 (RRKRSRPY).

This sequence belongs to the peptidase C12 family. BAP1 subfamily. In terms of assembly, core component of the polycomb repressive deubiquitinase (PR-DUB) complex, at least composed of BAP1, one of ASXL1, ASXL2 or (probably) ASXL3, and one of MBD5 or MBD6. The PR-DUB core associates with a number of accessory proteins, including FOXK1, FOXK2, KDM1B, HCFC1, YY1 and OGT; KDM1B specifically associates with ASXL2 PR-DUB complexes. The BAP1 deubiquitinase activity is not required for PR-DUB assembly. Homodimerizes (via coiled-coil hinge-region between the UCH and ULD domains) to mediate assembly of 2 copies of the BAP1-ASXL heterodimer into a bisymmetric tetramer; dimerization enhances association with nucleosomes. The PR-DUB complex associates with nucleosomes to mediate deubiquitination of 'lys-120' of histone H2AK118ub1 substrates; the association requires the positively charged C-terminal tail of BAP1. Interacts (via ULD domain) with ASXL1 (via DEUBAD domain); the interaction is direct and forms a ubiquitin binding cleft. The interaction with ASXL1 stabilizes BAP1 but is not required for nucleosome binding. Associates (via C-terminus) with nucleosome and chromatosome complexes through direct interaction with DNA and the histone3/4 dimer; this association displaces the histone-2A C-terminal tail, extending and orienting the H2AK118ub1 substrate towards the BAP1 deubiquitinase active site. Also interacts (via arginine finger) directly with the histone H2A-H2B acidic patch; this interaction is not critical for nucleosome-chromatosome association but may play a role in orienting the H2AK118ub1 substrate towards the PR-DUB complex active site. Interacts with BRCA1 (via the RING finger). Interacts (via HBM-like motif) with HCFC1. Interacts (via a C-terminal region overlapping the ULD domain) with YY1; the interaction is direct and requires the interaction with HCFC1. Interacts (when phosphorylated at Thr-493) with FOXK1. Interacts (when phosphorylated at Thr-493) with FOXK2; leading to recruitment of the PR-DUB complex and repression of FOXK2 target genes. Interacts (via non-classical PY-NLS) with TNPO1/transportin-1 (via HEAT repeats 8-12); the interaction is direct, mediates BAP1 nuclear localization and disrupts BAP1 homodimerization. Interacts (via C-terminus) with KPNA1/importin alpha5 and KPNA2/importin alpha1; these interactions can contribute to BAP1 nuclear localization but are less important than the interaction with TNPO1/transportin-1. The interaction with TNPO1/transportin-1 disrupts homodimerization and blocks ubiquitination by UBE2O. In terms of processing, ubiquitinated: monoubiquitinated at multiple sites within its nuclear localization signal (NLS) BY UBE2O, leading to cytoplasmic retention. Able to mediate autodeubiquitination via intramolecular interactions to counteract cytoplasmic retention. Monoubiquitinated on at least 4 sites near or within its PY-NLS. In terms of tissue distribution, highly expressed in testis, placenta and ovary. Expressed in breast. levels in the placenta increase over the course of pregnancy.

The protein resides in the cytoplasm. It is found in the nucleus. It localises to the chromosome. The catalysed reaction is Thiol-dependent hydrolysis of ester, thioester, amide, peptide and isopeptide bonds formed by the C-terminal Gly of ubiquitin (a 76-residue protein attached to proteins as an intracellular targeting signal).. Deubiquitinating enzyme that plays a key role in chromatin by mediating deubiquitination of histone H2A and HCFC1. Catalytic component of the polycomb repressive deubiquitinase (PR-DUB) complex, a complex that specifically mediates deubiquitination of histone H2A monoubiquitinated at 'Lys-120' (H2AK119ub1). Does not deubiquitinate monoubiquitinated histone H2B. The PR-DUB complex is an epigenetic regulator of gene expression and acts as a transcriptional coactivator, affecting genes involved in development, cell communication, signaling, cell proliferation and cell viability. Antagonizes PRC1 mediated H2AK119ub1 monoubiquitination. As part of the PR-DUB complex, associates with chromatin enriched in histone marks H3K4me1, H3K4me3, and H3K27Ac, but not in H3K27me3. Recruited to specific gene-regulatory regions by YY1. Acts as a regulator of cell growth by mediating deubiquitination of HCFC1 N-terminal and C-terminal chains, with some specificity toward 'Lys-48'-linked polyubiquitin chains compared to 'Lys-63'-linked polyubiquitin chains. Deubiquitination of HCFC1 does not lead to increase stability of HCFC1. Interferes with the BRCA1 and BARD1 heterodimer activity by inhibiting their ability to mediate ubiquitination and autoubiquitination. It however does not mediate deubiquitination of BRCA1 and BARD1. Able to mediate autodeubiquitination via intramolecular interactions to counteract monoubiquitination at the nuclear localization signal (NLS), thereby protecting it from cytoplasmic sequestration. Negatively regulates epithelial-mesenchymal transition (EMT) of trophoblast stem cells during placental development by regulating genes involved in epithelial cell integrity, cell adhesion and cytoskeletal organization. The sequence is that of Ubiquitin carboxyl-terminal hydrolase BAP1 from Homo sapiens (Human).